The primary structure comprises 160 residues: Deoxyuridine 5'-triphosphate nucleotidohydrolase (160 aa).

Substrate-binding positions include Arg-79 to Gly-81, Asn-92, Thr-96 to Asp-98, and Lys-106.

It belongs to the dUTPase family. Mg(2+) serves as cofactor.

It carries out the reaction dUTP + H2O = dUMP + diphosphate + H(+). It participates in pyrimidine metabolism; dUMP biosynthesis; dUMP from dCTP (dUTP route): step 2/2. This enzyme is involved in nucleotide metabolism: it produces dUMP, the immediate precursor of thymidine nucleotides and it decreases the intracellular concentration of dUTP so that uracil cannot be incorporated into DNA. The sequence is that of Deoxyuridine 5'-triphosphate nucleotidohydrolase from Rhizobium meliloti (strain 1021) (Ensifer meliloti).